A 473-amino-acid chain; its full sequence is Photosystem II CP43 reaction center protein (473 aa).

Positions 1–14 (MKTLYSPRRYYPVE) are excised as a propeptide. Residue threonine 15 is modified to N-acetylthreonine. At threonine 15 the chain carries Phosphothreonine. 5 consecutive transmembrane segments (helical) span residues 69–93 (LFEV…PHLA), 134–155 (IIGP…KDKN), 178–200 (KAVW…RVIT), 255–275 (KPFA…LSYS), and 291–312 (WFNN…ASQA). [CaMn4O5] cluster is bound at residue glutamate 367. Residues 447 to 471 (RARAAAAGFEKGIERETEPVLFMSP) form a helical membrane-spanning segment.

The protein belongs to the PsbB/PsbC family. PsbC subfamily. PSII is composed of 1 copy each of membrane proteins PsbA, PsbB, PsbC, PsbD, PsbE, PsbF, PsbH, PsbI, PsbJ, PsbK, PsbL, PsbM, PsbT, PsbX, PsbY, PsbZ, Psb30/Ycf12, at least 3 peripheral proteins of the oxygen-evolving complex and a large number of cofactors. It forms dimeric complexes. Requires Binds multiple chlorophylls and provides some of the ligands for the Ca-4Mn-5O cluster of the oxygen-evolving complex. It may also provide a ligand for a Cl- that is required for oxygen evolution. PSII binds additional chlorophylls, carotenoids and specific lipids. as cofactor.

The protein localises to the plastid. It localises to the chloroplast thylakoid membrane. One of the components of the core complex of photosystem II (PSII). It binds chlorophyll and helps catalyze the primary light-induced photochemical processes of PSII. PSII is a light-driven water:plastoquinone oxidoreductase, using light energy to abstract electrons from H(2)O, generating O(2) and a proton gradient subsequently used for ATP formation. This Chaetosphaeridium globosum (Charophycean green alga) protein is Photosystem II CP43 reaction center protein.